The following is a 315-amino-acid chain: Voltage-dependent calcium channel gamma-3 subunit (315 aa).

Transmembrane regions (helical) follow at residues 8–28 (IQML…TIAV), 104–124 (SSVF…CVAA), 135–155 (ILSA…GIIV), and 181–201 (FGAF…HIYI). S248 carries the post-translational modification Phosphoserine.

It belongs to the PMP-22/EMP/MP20 family. CACNG subfamily. The L-type calcium channel is composed of five subunits: alpha-1, alpha-2/delta, beta and gamma. Acts as an auxiliary subunit for AMPA-selective glutamate receptors (AMPARs). Found in a complex with GRIA1, GRIA2, GRIA3, GRIA4, CNIH2, CNIH3, CACNG2, CACNG4, CACNG5, CACNG7 and CACNG8. Interacts with AP4M1 and GRIA1; associates GRIA1 with the adaptor protein complex 4 (AP-4) to target GRIA1 to the somatodendritic compartment of neurons.

It is found in the membrane. Regulates the trafficking to the somatodendritic compartment and gating properties of AMPA-selective glutamate receptors (AMPARs). Promotes their targeting to the cell membrane and synapses and modulates their gating properties by slowing their rates of activation, deactivation and desensitization. Does not show subunit-specific AMPA receptor regulation and regulates all AMPAR subunits. Thought to stabilize the calcium channel in an inactivated (closed) state. In Homo sapiens (Human), this protein is Voltage-dependent calcium channel gamma-3 subunit (CACNG3).